A 656-amino-acid polypeptide reads, in one-letter code: Translation factor GUF1 homolog, mitochondrial (656 aa).

The 182-residue stretch at 55–236 (QRIRNFSIIA…EIVRRLPPPD (182 aa)) folds into the tr-type G domain. Residues 64–71 (AHVDHGKS), 129–133 (DTPGH), and 183–186 (NKID) contribute to the GTP site.

The protein belongs to the TRAFAC class translation factor GTPase superfamily. Classic translation factor GTPase family. LepA subfamily.

The protein localises to the mitochondrion inner membrane. The enzyme catalyses GTP + H2O = GDP + phosphate + H(+). In terms of biological role, promotes mitochondrial protein synthesis. May act as a fidelity factor of the translation reaction, by catalyzing a one-codon backward translocation of tRNAs on improperly translocated ribosomes. Binds to mitochondrial ribosomes in a GTP-dependent manner. The protein is Translation factor GUF1 homolog, mitochondrial of Aedes aegypti (Yellowfever mosquito).